The primary structure comprises 774 residues: Probable E3 ubiquitin-protein ligase HECTD2 (774 aa).

Residues 1-51 (MSEAARDLSPGAPPAVAAAAPEERKGKEPEREKLPPIVTAGAAAGLDRGSK) are disordered. A Phosphoserine modification is found at Ser-9. Residues 21-34 (PEERKGKEPEREKL) are compositionally biased toward basic and acidic residues. Positions 435 to 774 (KRADLKKKLK…ISNSEGFGLE (340 aa)) constitute an HECT domain. Cys-742 functions as the Glycyl thioester intermediate in the catalytic mechanism.

It carries out the reaction S-ubiquitinyl-[E2 ubiquitin-conjugating enzyme]-L-cysteine + [acceptor protein]-L-lysine = [E2 ubiquitin-conjugating enzyme]-L-cysteine + N(6)-ubiquitinyl-[acceptor protein]-L-lysine.. It participates in protein modification; protein ubiquitination. Functionally, E3 ubiquitin-protein ligase which accepts ubiquitin from an E2 ubiquitin-conjugating enzyme in the form of a thioester and then directly transfers the ubiquitin to targeted substrates. In Mus musculus (Mouse), this protein is Probable E3 ubiquitin-protein ligase HECTD2 (Hectd2).